The primary structure comprises 511 residues: Glutamate/gamma-aminobutyrate antiporter (511 aa).

Over 1–14 (MATLVQTGKAKQLT) the chain is Cytoplasmic. The helical transmembrane segment at 15–35 (LLGFFAITASMVMAVYEYPTF) threads the bilayer. The Periplasmic portion of the chain corresponds to 36 to 41 (ATSGFS). Residues 42–62 (LVFFLLLGGILWFIPVGLCAA) form a helical membrane-spanning segment. Topologically, residues 63–93 (EMATVDGWEEGGVFAWVSNTLGPRWGFAAIS) are cytoplasmic. A helical membrane pass occupies residues 94–114 (FGYLQIAIGFIPMLYFVLGAL). The Periplasmic portion of the chain corresponds to 115-127 (SYILKWPALNEDP). Residues 128-148 (ITKTIAALIILWALALTQFGG) form a helical membrane-spanning segment. Residues 149–157 (TKYTARIAK) lie on the Cytoplasmic side of the membrane. A helical transmembrane segment spans residues 158–178 (VGFFAGILLPAFILIALAAIY). At 179-200 (LHSGAPVAIEMDSKTFFPDFSK) the chain is on the periplasmic side. A helical transmembrane segment spans residues 201–221 (VGTLVVFVAFILSYMGVEASA). Residues 222 to 239 (THVNEMSNPGRDYPLAML) lie on the Cytoplasmic side of the membrane. Residues 240-260 (LLMVAAICLSSVGGLSIAMVI) traverse the membrane as a helical segment. Over 261 to 291 (PGNEINLSAGVMQTFTVLMSHVAPEIEWTVR) the chain is Periplasmic. Residues 292–312 (VISALLLLGVLAEIASWIVGP) form a helical membrane-spanning segment. Residues 313 to 335 (SRGMYVTAQKNLLPAAFAKMNKN) are Cytoplasmic-facing. The helical transmembrane segment at 336–356 (GVPVTLVISQLVITSIALIIL) threads the bilayer. The Periplasmic segment spans residues 357–366 (TNTGGGNNMS). The helical transmembrane segment at 367 to 387 (FLIALALTVVIYLCAYFMLFI) threads the bilayer. The Cytoplasmic segment spans residues 388-412 (GYIVLVLKHPDLKRTFNIPGGKGVK). Residues 413 to 433 (LVVAIVGLLTSIMAFIVSFLP) traverse the membrane as a helical segment. The Periplasmic segment spans residues 434–445 (PDNIQGDSTDMY). A helical transmembrane segment spans residues 446 to 466 (VELLVVSFLVVLALPFILYAV). Topologically, residues 467–511 (HDRKGKANTGVTLEPINSQNAPKGHFFLHPRARSPHYIVMNDKKH) are cytoplasmic.

This sequence belongs to the amino acid-polyamine-organocation (APC) superfamily. Glutamate:GABA antiporter (GGA) (TC 2.A.3.7) family.

The protein resides in the cell inner membrane. The enzyme catalyses 4-aminobutanoate(in) + L-glutamate(out) = 4-aminobutanoate(out) + L-glutamate(in). With respect to regulation, shows pH-dependent activity. The glutamate analog L-trans-pyrrolidine-2,4-dicarboxylic acid (L-PDC) blocks the uptake of glutamate by selective inhibition. Involved in glutaminase-dependent acid resistance. Exchanges extracellular glutamate (Glu) for intracellular gamma-aminobutyric acid (GABA) under acidic conditions. The ability to survive the extremely acidic conditions of the stomach is essential for successful colonization of the host by commensal and pathogenic bacteria. The polypeptide is Glutamate/gamma-aminobutyrate antiporter (gadC) (Escherichia coli O157:H7).